Consider the following 322-residue polypeptide: Porphobilinogen deaminase (322 aa).

The residue at position 254 (C254) is an S-(dipyrrolylmethanemethyl)cysteine.

Belongs to the HMBS family. As to quaternary structure, monomer. The cofactor is dipyrromethane.

It carries out the reaction 4 porphobilinogen + H2O = hydroxymethylbilane + 4 NH4(+). The protein operates within porphyrin-containing compound metabolism; protoporphyrin-IX biosynthesis; coproporphyrinogen-III from 5-aminolevulinate: step 2/4. Tetrapolymerization of the monopyrrole PBG into the hydroxymethylbilane pre-uroporphyrinogen in several discrete steps. This is Porphobilinogen deaminase from Methylococcus capsulatus (strain ATCC 33009 / NCIMB 11132 / Bath).